A 121-amino-acid polypeptide reads, in one-letter code: Small ribosomal subunit protein uS13 (121 aa).

The segment at 93 to 121 (RHLPVRGQNTKNNARTRKGPAVSIAGKKK) is disordered.

It belongs to the universal ribosomal protein uS13 family. As to quaternary structure, part of the 30S ribosomal subunit. Forms a loose heterodimer with protein S19. Forms two bridges to the 50S subunit in the 70S ribosome.

Its function is as follows. Located at the top of the head of the 30S subunit, it contacts several helices of the 16S rRNA. In the 70S ribosome it contacts the 23S rRNA (bridge B1a) and protein L5 of the 50S subunit (bridge B1b), connecting the 2 subunits; these bridges are implicated in subunit movement. Contacts the tRNAs in the A and P-sites. This is Small ribosomal subunit protein uS13 from Ligilactobacillus salivarius (strain UCC118) (Lactobacillus salivarius).